The following is a 93-amino-acid chain: Small ribosomal subunit protein uS19 (93 aa).

This sequence belongs to the universal ribosomal protein uS19 family.

Protein S19 forms a complex with S13 that binds strongly to the 16S ribosomal RNA. The sequence is that of Small ribosomal subunit protein uS19 from Blochmanniella floridana.